The chain runs to 168 residues: Ubiquitin-fold modifier-conjugating enzyme 1 (168 aa).

The active-site Glycyl thioester intermediate is the C119.

This sequence belongs to the ubiquitin-conjugating enzyme family. UFC1 subfamily.

Functionally, E2-like enzyme which forms an intermediate with UFM1 via a thioester linkage. The sequence is that of Ubiquitin-fold modifier-conjugating enzyme 1 from Drosophila grimshawi (Hawaiian fruit fly).